A 471-amino-acid polypeptide reads, in one-letter code: ATP synthase subunit beta (471 aa).

Residue 153–160 (GGAGVGKT) coordinates ATP.

Belongs to the ATPase alpha/beta chains family. In terms of assembly, F-type ATPases have 2 components, CF(1) - the catalytic core - and CF(0) - the membrane proton channel. CF(1) has five subunits: alpha(3), beta(3), gamma(1), delta(1), epsilon(1). CF(0) has four main subunits: a(1), b(1), b'(1) and c(9-12).

The protein localises to the cell membrane. The catalysed reaction is ATP + H2O + 4 H(+)(in) = ADP + phosphate + 5 H(+)(out). In terms of biological role, produces ATP from ADP in the presence of a proton gradient across the membrane. The catalytic sites are hosted primarily by the beta subunits. The polypeptide is ATP synthase subunit beta (Roseiflexus sp. (strain RS-1)).